We begin with the raw amino-acid sequence, 591 residues long: Aspartate--tRNA(Asp/Asn) ligase (591 aa).

E176 contributes to the L-aspartate binding site. An aspartate region spans residues 200-203 (QLFK). L-aspartate is bound at residue R222. ATP-binding positions include 222–224 (RDE) and Q231. Residue H450 coordinates L-aspartate. E484 serves as a coordination point for ATP. R491 is a binding site for L-aspartate. ATP is bound at residue 536 to 539 (GLDR).

It belongs to the class-II aminoacyl-tRNA synthetase family. Type 1 subfamily. In terms of assembly, homodimer.

The protein resides in the cytoplasm. It carries out the reaction tRNA(Asx) + L-aspartate + ATP = L-aspartyl-tRNA(Asx) + AMP + diphosphate. In terms of biological role, aspartyl-tRNA synthetase with relaxed tRNA specificity since it is able to aspartylate not only its cognate tRNA(Asp) but also tRNA(Asn). Reaction proceeds in two steps: L-aspartate is first activated by ATP to form Asp-AMP and then transferred to the acceptor end of tRNA(Asp/Asn). This Bacillus cereus (strain ATCC 14579 / DSM 31 / CCUG 7414 / JCM 2152 / NBRC 15305 / NCIMB 9373 / NCTC 2599 / NRRL B-3711) protein is Aspartate--tRNA(Asp/Asn) ligase.